Here is a 150-residue protein sequence, read N- to C-terminus: Transmembrane protein 35B (150 aa).

The first 21 residues, 1–21, serve as a signal peptide directing secretion; sequence MSFRVGVLRVLLGVFFALTGA. A run of 3 helical transmembrane segments spans residues 62–82, 84–104, and 111–131; these read TAVG…PPVL, EISN…LVVL, and YVPA…HFLA.

It belongs to the DoxX family.

Its subcellular location is the membrane. In Mus musculus (Mouse), this protein is Transmembrane protein 35B.